Reading from the N-terminus, the 183-residue chain is Adenine phosphoribosyltransferase (183 aa).

This sequence belongs to the purine/pyrimidine phosphoribosyltransferase family. In terms of assembly, homodimer.

Its subcellular location is the cytoplasm. The catalysed reaction is AMP + diphosphate = 5-phospho-alpha-D-ribose 1-diphosphate + adenine. The protein operates within purine metabolism; AMP biosynthesis via salvage pathway; AMP from adenine: step 1/1. In terms of biological role, catalyzes a salvage reaction resulting in the formation of AMP, that is energically less costly than de novo synthesis. This Salmonella arizonae (strain ATCC BAA-731 / CDC346-86 / RSK2980) protein is Adenine phosphoribosyltransferase.